The following is a 271-amino-acid chain: Glutamate racemase (271 aa).

Residues 10–11 (DS) and 42–43 (YG) each bind substrate. The active-site Proton donor/acceptor is Cys-73. 74–75 (NT) contributes to the substrate binding site. Cys-183 functions as the Proton donor/acceptor in the catalytic mechanism. 184–185 (TH) contacts substrate.

The protein belongs to the aspartate/glutamate racemases family.

It carries out the reaction L-glutamate = D-glutamate. It functions in the pathway cell wall biogenesis; peptidoglycan biosynthesis. In terms of biological role, provides the (R)-glutamate required for cell wall biosynthesis. This Lactococcus lactis subsp. cremoris (strain MG1363) protein is Glutamate racemase.